The primary structure comprises 419 residues: MAAVGVDSRRPETAMEETCNVKGAAAKQGEGLKQYYLQHIHELQRQLRQKTNNLNRLEAQRNELNSRVRMLREELQLLQEPGSYVGEVVKVMGKNKVLVKVHPEGKYVVDIDKSIDITKITPSTRVALRNDSYVLHLVLPSKVDPLVNLMKVEKVPDSTYDMIGGLDQQIKEIKEVIELPIKHPELFESLGIAQPKGVLLYGPPGTGKTLLARAVAHHTDCTFIRVSGSELVQKYIGEGSRMVRELFVMAREHAPSIIFMDEIDSIGSARMESGSGNGDSEVQRTMLELLNQLDGFEASNKIKVLMATNRIDILDQALLRPGRIDRKIEFPNPNEESRFDILKIHSRKMNLMRGIDLKKIAEKMNGASGAELKAVCTEAGMFALRERRVHVTQEDFEMAVAKVMKKDTEKNMSLRKLWK.

Alanine 2 carries the N-acetylalanine modification. 202–209 (GPPGTGKT) lines the ATP pocket. Residue lysine 406 forms a Glycyl lysine isopeptide (Lys-Gly) (interchain with G-Cter in ubiquitin) linkage.

Belongs to the AAA ATPase family. As to quaternary structure, component of the 19S regulatory particle (RP/PA700) base subcomplex of the 26S proteasome. The 26S proteasome is composed of a core protease (CP), known as the 20S proteasome, capped at one or both ends by the 19S regulatory particle (RP/PA700). The RP/PA700 complex is composed of at least 17 different subunits in two subcomplexes, the base and the lid, which form the portions proximal and distal to the 20S proteolytic core, respectively.

The protein localises to the cytoplasm. It is found in the nucleus. In terms of biological role, the 26S proteasome is involved in the ATP-dependent degradation of ubiquitinated proteins. The regulatory (or ATPase) complex confers ATP dependency and substrate specificity to the 26S complex. The polypeptide is 26S proteasome regulatory subunit 8 homolog A (RPT6A) (Arabidopsis thaliana (Mouse-ear cress)).